Reading from the N-terminus, the 93-residue chain is Small ribosomal subunit protein uS19 (93 aa).

It belongs to the universal ribosomal protein uS19 family.

Functionally, protein S19 forms a complex with S13 that binds strongly to the 16S ribosomal RNA. This Micrococcus luteus (strain ATCC 4698 / DSM 20030 / JCM 1464 / CCM 169 / CCUG 5858 / IAM 1056 / NBRC 3333 / NCIMB 9278 / NCTC 2665 / VKM Ac-2230) (Micrococcus lysodeikticus) protein is Small ribosomal subunit protein uS19.